The following is a 450-amino-acid chain: MAEYSGKHVVVVGAGCTGLGLARFFLDRGALVTLSDSRSREELVDVAELADHGLRFDCGGHDAALLAGADLIAISPGIPLTVPAVAGALQAGVPVQGEIEIAARELSAPMVAITGTNGKSTTTCLMGEIMRCWGRRAFVGGNLGTPLIEATRSTDWDWIVAEISSFQLEAIDTFRPRYGMLLNLTADHLDRYAGMGEYVAAKLRLFENMTAEDVAVVNADDALVVRSTTDLPCRKIPFSSSRVLDEGMGFDGQHIVWRHAGRQERFDVADLQLKGLHNVENVMAALIPPLMEGCPTDIAWKAVCGFSGLDHRMVLVREIDGVSWYDDSKGTNVGSVVKSLAGLQGPVTLIAGGKDKGGDYAPLAGLIGEKVEHLILIGQAADRMQAAFQGMTTILRADSLEAAVQQAQQVTMAGGTVLLSPGCSSFDMFRSYAERGEVFCRAVQALQGNG.

Residue 115–121 (GTNGKST) coordinates ATP.

The protein belongs to the MurCDEF family.

It localises to the cytoplasm. It carries out the reaction UDP-N-acetyl-alpha-D-muramoyl-L-alanine + D-glutamate + ATP = UDP-N-acetyl-alpha-D-muramoyl-L-alanyl-D-glutamate + ADP + phosphate + H(+). It functions in the pathway cell wall biogenesis; peptidoglycan biosynthesis. Functionally, cell wall formation. Catalyzes the addition of glutamate to the nucleotide precursor UDP-N-acetylmuramoyl-L-alanine (UMA). In Syntrophotalea carbinolica (strain DSM 2380 / NBRC 103641 / GraBd1) (Pelobacter carbinolicus), this protein is UDP-N-acetylmuramoylalanine--D-glutamate ligase.